Reading from the N-terminus, the 145-residue chain is CASP-like protein SELMODRAFT_406854 (145 aa).

At M1 to P31 the chain is on the cytoplasmic side. The chain crosses the membrane as a helical span at residues T32–V52. The Extracellular segment spans residues T53–L75. The helical transmembrane segment at I76 to F96 threads the bilayer. Residues L97–A112 are Cytoplasmic-facing. A helical membrane pass occupies residues L113–I133. The Extracellular segment spans residues R134 to V145.

It belongs to the Casparian strip membrane proteins (CASP) family. In terms of assembly, homodimer and heterodimers.

The protein resides in the cell membrane. The chain is CASP-like protein SELMODRAFT_406854 from Selaginella moellendorffii (Spikemoss).